The chain runs to 283 residues: Putative UTP--glucose-1-phosphate uridylyltransferase (283 aa).

It belongs to the UDPGP type 2 family.

The enzyme catalyses alpha-D-glucose 1-phosphate + UTP + H(+) = UDP-alpha-D-glucose + diphosphate. The protein is Putative UTP--glucose-1-phosphate uridylyltransferase of Methanocaldococcus jannaschii (strain ATCC 43067 / DSM 2661 / JAL-1 / JCM 10045 / NBRC 100440) (Methanococcus jannaschii).